A 750-amino-acid polypeptide reads, in one-letter code: Rho GTPase-activating protein 9 (750 aa).

The 67-residue stretch at 22–88 (PRGSQLCALY…PAAYMIEESI (67 aa)) folds into the SH3 domain. Disordered stretches follow at residues 120 to 187 (ALPS…LMSE) and 242 to 319 (WKPP…LLDD). Residues 163-180 (RSLSQEDLPSEASASTAG) are compositionally biased toward polar residues. The WW domain maps to 213–247 (LQRLDAWEQHLDPNSGRCFYINSLTGCKSWKPPRR). Composition is skewed to polar residues over residues 251–270 (ETNP…NDVL) and 291–300 (GSLSLSQRTS). Positions 301–317 (QLDPPALQAPRPLPQLL) are enriched in low complexity. Residues 322 to 435 (EVEKSGLLNM…WHRALRTVIE (114 aa)) form the PH domain. Lipid binding stretches follow at residues 342-345 (RKNW), 397-399 (SSR), and 432-669 (TVIE…CLSQ). Basic and acidic residues predominate over residues 446 to 462 (EAPTGRDQGSGDRENPL). The segment at 446–488 (EAPTGRDQGSGDRENPLELRLSGSGPAELSAGEDEEEESELVS) is disordered. A Phosphoserine modification is found at Ser475. Residues 476–485 (AGEDEEEESE) show a composition bias toward acidic residues. Phosphoserine is present on Ser500. Residues 542-749 (CQLESLCQRE…LMLTNFTSLF (208 aa)) form the Rho-GAP domain.

In terms of assembly, interacts with FASLG. In terms of tissue distribution, predominantly expressed in peripheral blood leukocytes, spleen, and thymus.

In terms of biological role, GTPase activator for the Rho-type GTPases by converting them to an inactive GDP-bound state. Has a substantial GAP activity toward CDC42 and RAC1 and less toward RHOA. Has a role in regulating adhesion of hematopoietic cells to the extracellular matrix. Binds phosphoinositides, and has the highest affinity for phosphatidylinositol 3,4,5-trisphosphate, followed by phosphatidylinositol 3,4-bisphosphate and phosphatidylinositol 4,5-bisphosphate. This chain is Rho GTPase-activating protein 9 (ARHGAP9), found in Homo sapiens (Human).